The chain runs to 759 residues: Solute carrier family 26 member 6 (759 aa).

The Cytoplasmic segment spans residues 1 to 115 (MGLADASGPR…PQGLAYALLA (115 aa)). Residues 116–136 (GLPPVFGLYSSFYPVFIYFLF) traverse the membrane as a helical segment. Residues 137–186 (GTSRHISVGTFAVMSVMVGSVTESLAPQALNDSMINETARDAARVQVAST) lie on the Extracellular side of the membrane. N-linked (GlcNAc) asparagine glycans are attached at residues N167 and N172. Residues 187-207 (LSVLVGLFQVGLGLIHFGFVV) traverse the membrane as a helical segment. Residues 208–263 (TYLSEPLVRGYTTAAAVQVFVSQLKYVFGLHLSSHSGPLSLIYTVLEVCWKLPQSK) are Cytoplasmic-facing. Residues 264-284 (VGTVVTAAVAGVVLVVVKLLN) traverse the membrane as a helical segment. Residues 285–293 (DKLQQQLPM) are Extracellular-facing. A helical transmembrane segment spans residues 294–314 (PIPGELLTLIGATGISYGMGL). At 315 to 347 (KHRFEVDVVGNIPAGLVPPVAPNTQLFSKLVGS) the chain is on the cytoplasmic side. Residues 348–368 (AFTIAVVGFAIAISLGKIFAL) form a helical membrane-spanning segment. At 369 to 379 (RHGYRVDSNQE) the chain is on the extracellular side. A helical membrane pass occupies residues 380-400 (LVALGLSNLIGGIFQCFPVSC). Residues 401 to 416 (SMSRSLVQESTGGNSQ) are Cytoplasmic-facing. A helical transmembrane segment spans residues 417–437 (VAGAISSLFILLIIVKLGELF). Over 438 to 484 (HDLPKAVLAAIIIVNLKGMLRQLSDMRSLWKANRADLLIWLVTFTAT) the chain is Extracellular. Residues 485-505 (ILLNLDLGLVVAVIFSLLLVV) traverse the membrane as a helical segment. Residues 506 to 759 (VRTQMPHYSV…PDSPVSVTRL (254 aa)) lie on the Cytoplasmic side of the membrane. The STAS domain maps to 530 to 742 (EYSEAKEVRG…ASVHDAVTFA (213 aa)). N553 and K582 each carry phosphoserine; by PKC. S616 bears the Phosphoserine mark. Residues 636-657 (GDKMEDATANGQEDSKAPDGST) are disordered. Residues S752 and S755 each carry the phosphoserine modification.

The protein belongs to the SLC26A/SulP transporter (TC 2.A.53) family. As to quaternary structure, interacts (via C-terminal domain) with PDZK1 (via C-terminal PDZ domain); the interaction induces chloride and oxalate exchange transport. Interacts with CFTR and SLC26A3. Interacts with AHCYL1; the interaction increases SLC26A6 activity. Interacts with NHERF1 (via the PDZ domains) and NHERF2 (via the PDZ domains). Interacts (via C-terminal cytoplasmic domain) with CA2; the interaction stimulates chloride-bicarbonate exchange activity. In terms of assembly, interacts with NHERF1 (via the PDZ domains) and NHERF2 (via the PDZ domains). Post-translationally, phosphorylated on serine residues by PKC; the phosphorylation disrupts interaction with carbonic anhydrase CA2 and reduces bicarbonate transport activity in a phorbol myristate acetate (PMA)-induced manner. Glycosylation at Asn-167 and Asn-172 positively regulates its chloride oxalate exchanger activity. As to expression, ubiquitous. Highest levels in kidney and pancreas. Lower expression in heart, skeletal muscle, liver and placenta. Also found in lung and brain. In terms of tissue distribution, ubiquitously expressed. Highest levels expressed in the kidney and pancreas. Expressed weakly in placenta, lung, liver and pancreas. As to expression, expressed in heart, brain, placenta, lung, liver, kidney, pancreas, spleen, thymus, prostate, testis and ovary.

Its subcellular location is the cell membrane. It localises to the apical cell membrane. It is found in the cytoplasmic vesicle membrane. The protein resides in the microsome. The protein localises to the basolateral cell membrane. The catalysed reaction is 2 hydrogencarbonate(in) + chloride(out) = 2 hydrogencarbonate(out) + chloride(in). It carries out the reaction oxalate(in) + chloride(out) = oxalate(out) + chloride(in). It catalyses the reaction oxalate(in) + formate(out) = oxalate(out) + formate(in). The enzyme catalyses oxalate(in) + sulfate(out) = oxalate(out) + sulfate(in). The catalysed reaction is 2 hydrogencarbonate(out) + sulfate(in) = 2 hydrogencarbonate(in) + sulfate(out). Its activity is regulated as follows. Oxalate transport activity is inhibited by 4,4'-diisothiocyanatostilbene-2,2'-disulfonic acid (DIDS). With respect to regulation, chloride, bicarbonate and sulfate transport activities are inhibited by 4,4'-diisothiocyanatostilbene-2,2'-disulfonic acid (DIDS). In terms of biological role, apical membrane anion-exchanger with wide epithelial distribution that plays a role as a component of the pH buffering system for maintaining acid-base homeostasis. Acts as a versatile DIDS-sensitive inorganic and organic anion transporter that mediates the uptake of monovalent anions like chloride, bicarbonate, formate and hydroxyl ion and divalent anions like sulfate and oxalate. Functions in multiple exchange modes involving pairs of these anions, which include chloride-bicarbonate, chloride-oxalate, oxalate-formate, oxalate-sulfate and chloride-formate exchange. Apical membrane chloride-bicarbonate exchanger that mediates luminal chloride absorption and bicarbonate secretion by the small intestinal brush border membrane and contributes to intracellular pH regulation in the duodenal upper villous epithelium during proton-coupled peptide absorption, possibly by providing a bicarbonate import pathway. Also mediates intestinal chloride absorption and oxalate secretion, thereby preventing hyperoxaluria and calcium oxalate urolithiasis. Transepithelial oxalate secretion, chloride-formate, chloride-oxalate and chloride-bicarbonate transport activities in the duodenum are inhibited by PKC activation in a calcium-independent manner. The apical membrane chloride-bicarbonate exchanger also provides a major route for fluid and bicarbonate secretion into the proximal tubules of the kidney as well as into the proximal part of the interlobular pancreatic ductal tree, where it mediates electrogenic chloride-bicarbonate exchange with a chloride-bicarbonate stoichiometry of 1:2, and hence will dilute and alkalinize protein-rich acinar secretion. Also mediates the transcellular sulfate absorption and oxalate secretion across the apical membrane in the duodenum and the formate ion efflux at the apical brush border of cells in the proximal tubules of kidney. Plays a role in sperm capacitation by increasing intracellular pH. Apical membrane chloride-bicarbonate exchanger. Its association with carbonic anhydrase CA2 forms a bicarbonate transport metabolon; hence maximizes the local concentration of bicarbonate at the transporter site. The protein is Solute carrier family 26 member 6 (SLC26A6) of Homo sapiens (Human).